Consider the following 106-residue polypeptide: uncharacterized protein (106 aa).

The Cytoplasmic portion of the chain corresponds to 1–6 (MYQTSP). A helical membrane pass occupies residues 7-27 (LSLFYFQVLVPKFLECFLCFP). Residues 28–32 (YHKIS) lie on the Extracellular side of the membrane. A helical membrane pass occupies residues 33–53 (LVALLSFFYCQLQTNMIILLS). Residues 54–73 (QIKRFLYRQIMIALKIKAKK) lie on the Cytoplasmic side of the membrane. A helical transmembrane segment spans residues 74–94 (FWFIFKYFNVSCDARLFNELF). The Extracellular segment spans residues 95–106 (YIFQTYVSVDSK).

It is found in the membrane. This is an uncharacterized protein from Saccharomyces cerevisiae (strain ATCC 204508 / S288c) (Baker's yeast).